Consider the following 304-residue polypeptide: Probable HTH-type transcriptional regulator LgoR (304 aa).

The HTH gntR-type domain maps to 1–70 (MSRSQNLRHN…VGNDYVIARK (70 aa)). The segment at residues 31–50 (QSALAEMYNISRTTVRHILS) is a DNA-binding region (H-T-H motif).

Functionally, may be a positive transcriptional regulator for lgoD and/or lgoT. Is essential for growth on L-galactonate as the sole carbon source. This chain is Probable HTH-type transcriptional regulator LgoR (lgoR), found in Escherichia coli (strain K12).